We begin with the raw amino-acid sequence, 252 residues long: Orotidine 5'-phosphate decarboxylase (252 aa).

Residues aspartate 26, lysine 48, 75-84 (DLKFHDIPNT), threonine 135, arginine 196, glutamine 205, glycine 225, and arginine 226 contribute to the substrate site. Lysine 77 functions as the Proton donor in the catalytic mechanism.

This sequence belongs to the OMP decarboxylase family. Type 1 subfamily. In terms of assembly, homodimer.

It catalyses the reaction orotidine 5'-phosphate + H(+) = UMP + CO2. The protein operates within pyrimidine metabolism; UMP biosynthesis via de novo pathway; UMP from orotate: step 2/2. Catalyzes the decarboxylation of orotidine 5'-monophosphate (OMP) to uridine 5'-monophosphate (UMP). The protein is Orotidine 5'-phosphate decarboxylase of Sodalis glossinidius (strain morsitans).